We begin with the raw amino-acid sequence, 372 residues long: NAD(P)H-quinone oxidoreductase subunit 1 (372 aa).

8 consecutive transmembrane segments (helical) span residues 28-48, 97-117, 130-150, 176-196, 204-224, 265-285, 308-328, and 351-371; these read IWLP…VLVV, WLFT…YLIV, VGIF…LMSG, LALA…IDIV, ILGW…IAAL, LVLS…FPIP, SLGI…AVLL, and VALV…IAFG.

The protein belongs to the complex I subunit 1 family. As to quaternary structure, NDH-1 is composed of at least 11 different subunits.

It is found in the cellular thylakoid membrane. The enzyme catalyses a plastoquinone + NADH + (n+1) H(+)(in) = a plastoquinol + NAD(+) + n H(+)(out). It catalyses the reaction a plastoquinone + NADPH + (n+1) H(+)(in) = a plastoquinol + NADP(+) + n H(+)(out). Its function is as follows. NDH-1 shuttles electrons from an unknown electron donor, via FMN and iron-sulfur (Fe-S) centers, to quinones in the respiratory and/or the photosynthetic chain. The immediate electron acceptor for the enzyme in this species is believed to be plastoquinone. Couples the redox reaction to proton translocation, and thus conserves the redox energy in a proton gradient. This is NAD(P)H-quinone oxidoreductase subunit 1 from Picosynechococcus sp. (strain ATCC 27264 / PCC 7002 / PR-6) (Agmenellum quadruplicatum).